We begin with the raw amino-acid sequence, 64 residues long: U-scoloptoxin(14)-Er1a (64 aa).

Residues 1–23 form the signal peptide; that stretch reads MRPSFPLLLIMLLVCTAHHMVSG.

It belongs to the scoloptoxin-14 family. Contains 4 disulfide bonds. As to expression, expressed by the venom gland.

Its subcellular location is the secreted. This chain is U-scoloptoxin(14)-Er1a, found in Ethmostigmus rubripes (Giant centipede).